We begin with the raw amino-acid sequence, 351 residues long: Probable galacturonosyltransferase-like 4 (351 aa).

Over 1 to 8 (MASRSLSY) the chain is Cytoplasmic. Residues 9–29 (TQLLGLLSFILLLVTTTTMAV) form a helical; Signal-anchor for type II membrane protein membrane-spanning segment. Topologically, residues 30–351 (RVGVILHKPS…YRSSRHSLEE (322 aa)) are lumenal. Residues Asn96 and Asn203 are each glycosylated (N-linked (GlcNAc...) asparagine).

Belongs to the glycosyltransferase 8 family.

It localises to the golgi apparatus membrane. It participates in glycan metabolism; pectin biosynthesis. May be involved in pectin and/or xylans biosynthesis in cell walls. This Arabidopsis thaliana (Mouse-ear cress) protein is Probable galacturonosyltransferase-like 4 (GATL4).